Here is a 346-residue protein sequence, read N- to C-terminus: Porin Omp2a (346 aa).

Residues M1 to A22 form the signal peptide.

Belongs to the alphaproteobacteria porin family. In terms of assembly, monomer.

It is found in the cell outer membrane. In terms of biological role, forms passive diffusion pores that allow small molecular weight hydrophilic materials across the outer membrane. This chain is Porin Omp2a (omp2a), found in Brucella ovis.